We begin with the raw amino-acid sequence, 83 residues long: Small ribosomal subunit protein eS21 (83 aa).

The residue at position 1 (methionine 1) is an N-acetylmethionine. Lysine 81 carries the post-translational modification N6-acetyllysine.

The protein belongs to the eukaryotic ribosomal protein eS21 family. As to quaternary structure, component of the 40S small ribosomal subunit.

It is found in the cytoplasm. It localises to the cytosol. Its subcellular location is the rough endoplasmic reticulum. Its function is as follows. Component of the small ribosomal subunit. The ribosome is a large ribonucleoprotein complex responsible for the synthesis of proteins in the cell. The chain is Small ribosomal subunit protein eS21 (Rps21) from Mus musculus (Mouse).